Here is a 1233-residue protein sequence, read N- to C-terminus: Mitogen-activated protein kinase kinase kinase kinase 4 (1233 aa).

An N-acetylalanine modification is found at alanine 2. Position 5 is a phosphoserine (serine 5). Residues 25–289 (FELVEVVGNG…EQLLKHPFIR (265 aa)) form the Protein kinase domain. ATP-binding positions include 31–39 (VGNGTYGQV) and lysine 53. Residue aspartate 152 is the Proton acceptor of the active site. Disordered stretches follow at residues 305–348 (IDRT…VPGE), 401–463 (QKEQ…VERE), and 489–805 (QAML…ETES). A compositionally biased stretch (acidic residues) spans 316 to 337 (DETEYEYSGSEEEEEEVPEQEG). Residues serine 323 and serine 325 each carry the phosphoserine modification. Residues 521 to 537 (PEPKPHYDPADRAREVQ) are compositionally biased toward basic and acidic residues. Serine 543 is subject to Phosphoserine. The segment covering 544–559 (LKNNVSPVSRSHSFSD) has biased composition (polar residues). Phosphoserine occurs at positions 619, 621, 629, and 646. Residues 654 to 663 (LLWERVEKLV) are compositionally biased toward basic and acidic residues. Low complexity predominate over residues 666–692 (PGSGSSSGSSNSGSQPGSHPGSQSGSG). Phosphoserine occurs at positions 691, 703, and 706. Basic and acidic residues-rich tracts occupy residues 713–726 (SAAK…EVFR) and 741–756 (KELR…HKVT). A compositionally biased stretch (acidic residues) spans 766 to 781 (GTTDEEEEDVEQEGAD). Residues 783–803 (STSGPEDTRAASSPNLSNGET) show a composition bias toward polar residues. Phosphoserine occurs at positions 785, 794, 795, 799, and 817. Threonine 822 carries the phosphothreonine modification. 4 positions are modified to phosphoserine: serine 846, serine 849, serine 894, and serine 907. The interval 852 to 1206 (PFIDPRLLQI…LKFLCGRNDK (355 aa)) is mediates interaction with RAP2A. Positions 920 to 1207 (NSEILCAALW…KFLCGRNDKV (288 aa)) constitute a CNH domain.

The protein belongs to the protein kinase superfamily. STE Ser/Thr protein kinase family. STE20 subfamily. In terms of assembly, interacts with the SH3 domain of the adapter proteins Nck. Interacts (via its CNH regulatory domain) with ATL1 (via the N-terminal region). Interacts with RAP2A (GTP-bound form preferentially). Mg(2+) serves as cofactor. As to expression, appears to be ubiquitous, expressed in all tissue types examined. Highest levels observed in heart and brain.

The protein resides in the cytoplasm. It catalyses the reaction L-seryl-[protein] + ATP = O-phospho-L-seryl-[protein] + ADP + H(+). The catalysed reaction is L-threonyl-[protein] + ATP = O-phospho-L-threonyl-[protein] + ADP + H(+). Its function is as follows. Serine/threonine kinase that plays a role in the response to environmental stress and cytokines such as TNF-alpha. Appears to act upstream of the JUN N-terminal pathway. Activator of the Hippo signaling pathway which plays a pivotal role in organ size control and tumor suppression by restricting proliferation and promoting apoptosis. MAP4Ks act in parallel to and are partially redundant with STK3/MST2 and STK4/MST2 in the phosphorylation and activation of LATS1/2, and establish MAP4Ks as components of the expanded Hippo pathway. Phosphorylates SMAD1 on Thr-322. The sequence is that of Mitogen-activated protein kinase kinase kinase kinase 4 (Map4k4) from Mus musculus (Mouse).